A 440-amino-acid polypeptide reads, in one-letter code: Muscarinic acetylcholine receptor M2 (440 aa).

The helical transmembrane segment at 1–19 (VLVAGSLSLVTIIGNILVM) threads the bilayer. The Cytoplasmic portion of the chain corresponds to 20–33 (VSIKVNRHLQTVNN). Residues 34–54 (YFLFSLACADLIIGVFSMNLY) traverse the membrane as a helical segment. Residues 55 to 71 (TLYTVIGYWPLGPVVCD) are Extracellular-facing. An intrachain disulfide couples Cys70 to Cys150. A helical transmembrane segment spans residues 72–93 (LWLALDYVVSNASVMNLLIISF). The Important for signaling motif lies at 94–96 (DRY). Residues 94–113 (DRYFCVTKPLTYPVKRTTKM) lie on the Cytoplasmic side of the membrane. Residues 114-136 (AGMMIAAAWVLSFILWAPAILFW) form a helical membrane-spanning segment. Topologically, residues 137–158 (QFIVGVRTVEDGECYIQFFSNA) are extracellular. The helical transmembrane segment at 159–183 (AVTFGTAIAAFYLPVIIMTVLYWHI) threads the bilayer. Residues 184 to 361 (SRASKSRIKK…PPSREKKVTR (178 aa)) lie on the Cytoplasmic side of the membrane. Residues 192–329 (KKDKKEPVAN…VVGSSGQNGD (138 aa)) form a disordered region. Residue Ser206 is modified to Phosphoserine. The span at 228-244 (GLEHNKIQNGKAPRDPV) shows a compositional bias: basic and acidic residues. Polar residues-rich tracts occupy residues 258 to 267 (NDSTSVSAVA), 278 to 287 (DENTVSTSLG), and 308 to 327 (SDSCTPTNTTVEVVGSSGQN). Residues 362–384 (TILAILLAFIITWAPYNVMVLIN) traverse the membrane as a helical segment. Topologically, residues 385–392 (TFCAPCIP) are extracellular. The cysteines at positions 387 and 390 are disulfide-linked. The chain crosses the membrane as a helical span at residues 393–416 (NTVWTIGYWLCYINSTINPACYAL). Residues 410 to 414 (NPACY) carry the Important for signaling motif. The Cytoplasmic portion of the chain corresponds to 417-440 (CNATFKKTFKHLLMCHYKNIGATR). Residues Thr420, Thr424, and Thr439 each carry the phosphothreonine modification.

Belongs to the G-protein coupled receptor 1 family. Muscarinic acetylcholine receptor subfamily. CHRM2 sub-subfamily. Interacts with ARRB1 and ARRB2. Interacts with RACK1; the interaction regulates CHRM2 internalization. Post-translationally, phosphorylated in response to agonist treatment.

The protein resides in the cell membrane. The protein localises to the postsynaptic cell membrane. The muscarinic acetylcholine receptor mediates various cellular responses, including inhibition of adenylate cyclase, breakdown of phosphoinositides and modulation of potassium channels through the action of G proteins. Primary transducing effect is adenylate cyclase inhibition. Signaling promotes phospholipase C activity, leading to the release of inositol trisphosphate (IP3); this then triggers calcium ion release into the cytosol. This is Muscarinic acetylcholine receptor M2 (CHRM2) from Pan troglodytes (Chimpanzee).